The following is a 729-amino-acid chain: Ribosomal RNA large subunit methyltransferase K/L (729 aa).

The THUMP domain occupies 47–158 (TFYRLCLWSR…KNELTLALDL (112 aa)).

Belongs to the methyltransferase superfamily. RlmKL family.

The protein localises to the cytoplasm. The enzyme catalyses guanosine(2445) in 23S rRNA + S-adenosyl-L-methionine = N(2)-methylguanosine(2445) in 23S rRNA + S-adenosyl-L-homocysteine + H(+). The catalysed reaction is guanosine(2069) in 23S rRNA + S-adenosyl-L-methionine = N(2)-methylguanosine(2069) in 23S rRNA + S-adenosyl-L-homocysteine + H(+). Specifically methylates the guanine in position 2445 (m2G2445) and the guanine in position 2069 (m7G2069) of 23S rRNA. The chain is Ribosomal RNA large subunit methyltransferase K/L from Dichelobacter nodosus (strain VCS1703A).